The primary structure comprises 766 residues: TBC1 domain family member 30 (766 aa).

Residues 87-295 (GIPKEWRRKV…KIWDSVFFEG (209 aa)) enclose the Rab-GAP TBC domain. The segment at 380–406 (PTSVSGRHSKARDSDDENGPDDEDAVA) is disordered. A compositionally biased stretch (acidic residues) spans 393 to 404 (SDDENGPDDEDA). Residues 422–491 (ELQKYQKQIK…YSRIKKKQQQ (70 aa)) adopt a coiled-coil conformation. Disordered stretches follow at residues 603–647 (SSLG…EPVF) and 731–766 (NLGL…TKKR). S642 carries the phosphoserine modification. The segment covering 751–766 (RGFNKSGIGNSSTKKR) has biased composition (polar residues).

Its subcellular location is the cell membrane. Functionally, may act as a GTPase-activating protein for Rab family protein(s). The polypeptide is TBC1 domain family member 30 (Tbc1d30) (Mus musculus (Mouse)).